The sequence spans 731 residues: Actin filament-associated protein 1 (731 aa).

The residue at position 1 (Met-1) is an N-acetylmethionine. The tract at residues 56-90 (NNLPAPPQMPLPEIPQPWLPPDSGPPPLPTSSLPE) is disordered. Residues 59 to 84 (PAPPQMPLPEIPQPWLPPDSGPPPLP) are compositionally biased toward pro residues. Residues 70–73 (PQPW) carry the SH3-binding motif. The SH2-binding 1 signature appears at 93 to 96 (YEEA). Residues 118–139 (SSSYESYDEEEEDGKGKKTRHQ) form a disordered region. The PH 1 domain occupies 152–248 (DAKICAFLLR…WLKVIKEAYS (97 aa)). Residues 252 to 318 (GPVDPECSPP…SKSEAKGTVS (67 aa)) are disordered. Positions 271-284 (AELEKKLSSERPSS) are enriched in basic and acidic residues. A phosphoserine mark is found at Ser-283 and Ser-284. Positions 348 to 442 (DVPTCGYLNV…WIGILLAETG (95 aa)) constitute a PH 2 domain. Residues 452–457 (YDYIDV) carry the SH2-binding 2 motif. Residues 513-544 (KNKKPPASSNGVPVKGKAPSSQQKKVETAGGV) are disordered. Ser-549 carries the phosphoserine modification. Residues 558 to 649 (KNRVEADAKR…VKESLKKALA (92 aa)) adopt a coiled-coil conformation. An interaction with F-actin region spans residues 595 to 638 (DLRAAIEVNAGRKTQAALEDKLKRLEEECKQREAERVSLELELT). The segment at 658–731 (IEPRSGTSSP…AKEWELKNGT (74 aa)) is disordered. A phosphoserine mark is found at Ser-665, Ser-666, and Ser-669. Thr-676 bears the Phosphothreonine mark. Over residues 678–687 (ENSPISSCDT) the composition is skewed to polar residues. Ser-680 and Ser-688 each carry phosphoserine. A compositionally biased stretch (basic and acidic residues) spans 721 to 731 (KAKEWELKNGT).

Monomer and homomultimer. Interacts via its C-terminus with F-actin; probably involving AFAP1 multimers. Interacts with activated SRC SH3-SH2 domains. Interacts via its PH 1 domain with PRKCA, PRKCB and PRKCI. Post-translationally, phosphorylated on tyrosine residues by SRC.

The protein resides in the cytoplasm. Its subcellular location is the cytoskeleton. It is found in the stress fiber. Functionally, can cross-link actin filaments into both network and bundle structures. May modulate changes in actin filament integrity and induce lamellipodia formation. May function as an adapter molecule that links other proteins, such as SRC and PKC to the actin cytoskeleton. The chain is Actin filament-associated protein 1 (Afap1) from Mus musculus (Mouse).